A 370-amino-acid polypeptide reads, in one-letter code: Homospermidine synthase (370 aa).

It belongs to the deoxyhypusine synthase family. In terms of assembly, homotetramer. NAD(+) is required as a cofactor.

It carries out the reaction putrescine + spermidine = sym-homospermidine + propane-1,3-diamine. The protein operates within alkaloid biosynthesis; pyrrolizidine alkaloid biosynthesis. Functionally, catalyzes the transfer of an aminobutyl unit from spermidine onto putrescine. The resulting polyamine homospermidine is a precursor in the biosynthesis of pyrrolizidine alkaloids. The protein is Homospermidine synthase (HSS1) of Senecio vulgaris (Common groundsel).